We begin with the raw amino-acid sequence, 840 residues long: OTU domain-containing protein 7B (840 aa).

The interval 49 to 88 (AGNLSPPFSGGSTCPKTPEKGGSDREPTRPSRPILQRQDD) is disordered. A compositionally biased stretch (basic and acidic residues) spans 65-77 (TPEKGGSDREPTR). Serine 100 bears the Phosphoserine mark. The segment at 152 to 401 (ERDLIEQSML…AVDPGKGWEW (250 aa)) is TRAF-binding. Residues 167–440 (AGRLNWWVSM…VKWIPLSSDS (274 aa)) form a catalytic region. The OTU domain maps to 183 to 365 (LLPLATTGDG…QAHFSALVSM (183 aa)). The tract at residues 187–193 (ATTGDGN) is regulatory loop. Aspartate 191 is an active-site residue. The active-site Nucleophile is cysteine 194. Catalysis depends on histidine 358, which acts as the Proton acceptor. Over residues 440–452 (SQAPLAQPESPTA) the composition is skewed to polar residues. Disordered stretches follow at residues 440-592 (SQAP…YSQE) and 653-710 (IMNG…VHCQ). Basic and acidic residues-rich tracts occupy residues 456-471 (DEPR…DKES) and 488-500 (SKRD…KRAD). Phosphoserine is present on residues serine 464, serine 467, and serine 471. Positions 483-498 (RRKEKSKRDREKDKKR) match the Nuclear localization signal motif. The segment covering 531–541 (KPGGLGSGSGI) has biased composition (gly residues). Threonine 730 carries the post-translational modification Phosphothreonine. The A20-type zinc finger occupies 793-828 (PPTQTKCKQPNCSFYGHPETNNLCSCCYREELRRRE). 4 residues coordinate Zn(2+): cysteine 799, cysteine 804, cysteine 816, and cysteine 819.

It belongs to the peptidase C64 family. As to quaternary structure, interacts with TRAF6. Interacts with PARK7, leading to inhibit deubiquitinase activity. Interacts with EGFR, ITCH and NEDD4. Interacts with TRAF3. Interacts with ZAP70 in activated T cells, but not in resting T cells. Post-translationally, phosphorylated by EGFR.

Its subcellular location is the cytoplasm. It localises to the nucleus. The enzyme catalyses Thiol-dependent hydrolysis of ester, thioester, amide, peptide and isopeptide bonds formed by the C-terminal Gly of ubiquitin (a 76-residue protein attached to proteins as an intracellular targeting signal).. Deubiquitinase activity is inhibited following interaction with PARK7. In terms of biological role, negative regulator of the non-canonical NF-kappa-B pathway that acts by mediating deubiquitination of TRAF3, an inhibitor of the NF-kappa-B pathway, thereby acting as a negative regulator of B-cell responses. In response to non-canonical NF-kappa-B stimuli, deubiquitinates 'Lys-48'-linked polyubiquitin chains of TRAF3, preventing TRAF3 proteolysis and over-activation of non-canonical NF-kappa-B. Negatively regulates mucosal immunity against infections. Deubiquitinates ZAP70, and thereby regulates T cell receptor (TCR) signaling that leads to the activation of NF-kappa-B. Plays a role in T cell homeostasis and is required for normal T cell responses, including production of IFNG and IL2. Mediates deubiquitination of EGFR. Has deubiquitinating activity toward 'Lys-11', 'Lys-48' and 'Lys-63'-linked polyubiquitin chains. Has a much higher catalytic rate with 'Lys-11'-linked polyubiquitin chains (in vitro); however the physiological significance of these data are unsure. Hydrolyzes both linear and branched forms of polyubiquitin. Acts as a regulator of mTORC1 and mTORC2 assembly by mediating 'Lys-63'-linked deubiquitination of MLST8, thereby promoting assembly of the mTORC2 complex, while inibiting formation of the mTORC1 complex. The chain is OTU domain-containing protein 7B (Otud7b) from Mus musculus (Mouse).